A 196-amino-acid chain; its full sequence is Corrinoid adenosyltransferase CobA (196 aa).

36-42 (GNGKGKT) serves as a coordination point for ATP.

This sequence belongs to the Cob(I)alamin adenosyltransferase family. As to quaternary structure, homodimer.

The protein resides in the cytoplasm. It catalyses the reaction 2 cob(II)yrinate a,c diamide + reduced [electron-transfer flavoprotein] + 2 ATP = 2 adenosylcob(III)yrinate a,c-diamide + 2 triphosphate + oxidized [electron-transfer flavoprotein] + 3 H(+). The enzyme catalyses 2 cob(II)alamin + reduced [electron-transfer flavoprotein] + 2 ATP = 2 adenosylcob(III)alamin + 2 triphosphate + oxidized [electron-transfer flavoprotein] + 3 H(+). The protein operates within cofactor biosynthesis; adenosylcobalamin biosynthesis; adenosylcobalamin from cob(II)yrinate a,c-diamide: step 2/7. In terms of biological role, required for both de novo synthesis of the corrin ring for the assimilation of exogenous corrinoids. Participates in the adenosylation of a variety of incomplete and complete corrinoids. In Salmonella typhimurium (strain LT2 / SGSC1412 / ATCC 700720), this protein is Corrinoid adenosyltransferase CobA (btuR).